The following is a 353-amino-acid chain: Phosphate acyltransferase (353 aa).

It belongs to the PlsX family. Homodimer. Probably interacts with PlsY.

Its subcellular location is the cytoplasm. It catalyses the reaction a fatty acyl-[ACP] + phosphate = an acyl phosphate + holo-[ACP]. It participates in lipid metabolism; phospholipid metabolism. Catalyzes the reversible formation of acyl-phosphate (acyl-PO(4)) from acyl-[acyl-carrier-protein] (acyl-ACP). This enzyme utilizes acyl-ACP as fatty acyl donor, but not acyl-CoA. The polypeptide is Phosphate acyltransferase (Bradyrhizobium diazoefficiens (strain JCM 10833 / BCRC 13528 / IAM 13628 / NBRC 14792 / USDA 110)).